The sequence spans 3317 residues: Cadherin-23 (3317 aa).

Residues 1-23 (MRHPPVTWCAMLWLLMLVSGSWG) form the signal peptide. At 24–3062 (QVNRLPFFTN…SVQLPDDMSA (3039 aa)) the chain is on the extracellular side. Cadherin domains are found at residues 34-132 (HFFD…APTF), 133-236 (HNQP…DPIF), 237-348 (INLP…APEF), 349-458 (NSSE…RPIF), 459-559 (SQPL…VPTF), 560-669 (QKDA…PPTF), 670-782 (SKPA…APYY), 777-888 (KDAP…DPTF), 889-993 (QNLP…TPTF), 994-1100 (FPAV…RPIF), 1101-1206 (LQSS…APVF), 1208-1311 (QQQY…AVQF), 1312-1416 (SNAS…SPRF), 1418-1525 (FTSD…PPVI), 1527-1632 (SPFG…APVF), 1633-1742 (QQPH…VPTF), 1743-1849 (PRDY…DPVL), 1850-1957 (LNLP…HPLF), 1958-2067 (TEGT…WPTF), 2068-2172 (SPPA…RPEF), 2173-2291 (LNPI…TPQF), 2295-2400 (GITY…NPIF), 2401-2507 (DQLS…RPQF), 2508-2609 (SKPQ…RPVF), 2612-2720 (PPNG…EPLF), 2727-2844 (SPQY…PPRF), and 2845-2973 (TKAE…EEEF). N-linked (GlcNAc...) asparagine glycosylation is found at asparagine 155 and asparagine 206. Residues asparagine 349, asparagine 391, asparagine 432, asparagine 464, asparagine 470, asparagine 600, asparagine 692, asparagine 763, asparagine 808, asparagine 825, asparagine 939, asparagine 999, asparagine 1016, asparagine 1169, asparagine 1280, asparagine 1313, asparagine 1471, asparagine 1532, asparagine 1649, asparagine 1665, asparagine 1816, asparagine 1855, asparagine 1887, asparagine 1900, asparagine 2012, asparagine 2048, asparagine 2127, asparagine 2166, asparagine 2193, asparagine 2261, asparagine 2355, and asparagine 2367 are each glycosylated (N-linked (GlcNAc...) asparagine). Residues asparagine 2576, asparagine 2614, asparagine 2747, asparagine 2806, asparagine 2875, asparagine 2894, asparagine 2939, and asparagine 2979 are each glycosylated (N-linked (GlcNAc...) asparagine). A helical membrane pass occupies residues 3063–3083 (LQMAIIVLAILLFLAAMLFVL). At 3084–3317 (MNWYYRTIHK…MESPLEITEL (234 aa)) the chain is on the cytoplasmic side.

In terms of assembly, antiparallel heterodimer with PCDH15. Interacts with USH1C and USH1G.

Its subcellular location is the cell membrane. Its function is as follows. Cadherins are calcium-dependent cell adhesion proteins. They preferentially interact with themselves in a homophilic manner in connecting cells. CDH23 is required for establishing and/or maintaining the proper organization of the stereocilia bundle of hair cells in the cochlea and the vestibule during late embryonic/early postnatal development. It is part of the functional network formed by USH1C, USH1G, CDH23 and MYO7A that mediates mechanotransduction in cochlear hair cells. Required for normal hearing. This chain is Cadherin-23 (Cdh23), found in Rattus norvegicus (Rat).